Reading from the N-terminus, the 146-residue chain is Ecotin-like protein 1 (146 aa).

It belongs to the protease inhibitor I11 (ecotin) family.

In Leishmania major, this protein is Ecotin-like protein 1 (ISP1).